The chain runs to 397 residues: Subtilisin-like protease 3 (397 aa).

A signal peptide spans 1–19 (MGCIKVISVFLAAIAAVDA). Residues 20–116 (RAFFHNRGGN…VEHDRVVKLA (97 aa)) constitute a propeptide that is removed on maturation. One can recognise an Inhibitor I9 domain in the interval 35–116 (SYIVVMKDGV…VEHDRVVKLA (82 aa)). A Peptidase S8 domain is found at 126-397 (TWGLGRVSHK…NRLLYNGSGR (272 aa)). Catalysis depends on charge relay system residues aspartate 158 and histidine 189. Asparagine 250 carries N-linked (GlcNAc...) asparagine glycosylation. The active-site Charge relay system is the serine 344. N-linked (GlcNAc...) asparagine glycosylation is present at asparagine 393.

This sequence belongs to the peptidase S8 family.

The protein resides in the secreted. Its function is as follows. Secreted subtilisin-like serine protease with keratinolytic activity that contributes to pathogenicity. This chain is Subtilisin-like protease 3 (SUB3), found in Arthroderma benhamiae (strain ATCC MYA-4681 / CBS 112371) (Trichophyton mentagrophytes).